A 700-amino-acid chain; its full sequence is Beta-galactosidase BgaB (700 aa).

Arg122 and Asn160 together coordinate substrate. Residue Glu161 is the Proton donor of the active site. The active-site Nucleophile is Glu320. Substrate is bound by residues Trp328 and 368-371 (EAFH).

Belongs to the glycosyl hydrolase 42 family. As to quaternary structure, trimer. Tetramer. The N-terminus is blocked.

It catalyses the reaction Hydrolysis of terminal non-reducing beta-D-galactose residues in beta-D-galactosides.. Its activity is regulated as follows. Inhibited by high substrate concentrations (100 mg/ml). No effect on activity with various EDTA concentrations (0-1 mM). 20-fold higher activity when cells grown on TOS than when cells grown on galactose, glucose and lactose. Functionally, involved in the hydrolysis of transgalactooligosaccharides (TOS). Highly active towards Gal(beta1-4)Gal and Gal(beta1-4)-Gal-containing oligosaccharides. Low activity towards Gal(beta1-3)Gal, lactose and Gal(beta1-3)GalOMe. No activity towards Gal(beta1-6)Gal, Gal(beta1-4)Man, Gal(alpha1-4)Gal, Gal(alpha1-3)Gal(beta1-4)Gal, lactulose, 3'fucosyllactose, lacto-N-fucopentaose I, lacto-N-fucopentaose II, cellobiose, maltose or sucrose. No transglycosylation activity is found at high substrate concentrations (100 mg/ml) and only low transglycosylation activity at lower substrate concentrations (10 mg/ml). This chain is Beta-galactosidase BgaB (bgaB), found in Bifidobacterium adolescentis (strain ATCC 15703 / DSM 20083 / NCTC 11814 / E194a).